A 285-amino-acid chain; its full sequence is Putative cytochrome c peroxidase, mitochondrial (285 aa).

Histidine 37 (proton acceptor) is an active-site residue. Histidine 161 is a binding site for heme b. The active-site Tryptophan radical intermediate is tryptophan 177.

The protein belongs to the peroxidase family. Cytochrome c peroxidase subfamily. Forms a one-to-one complex with cytochrome c. Requires heme b as cofactor.

The protein localises to the mitochondrion matrix. The protein resides in the mitochondrion intermembrane space. It carries out the reaction 2 Fe(II)-[cytochrome c] + H2O2 + 2 H(+) = 2 Fe(III)-[cytochrome c] + 2 H2O. Functionally, destroys radicals which are normally produced within the cells and which are toxic to biological systems. The protein is Putative cytochrome c peroxidase, mitochondrial of Yarrowia lipolytica (strain CLIB 122 / E 150) (Yeast).